The following is a 321-amino-acid chain: Lipoyl synthase (321 aa).

[4Fe-4S] cluster contacts are provided by Cys68, Cys73, Cys79, Cys94, Cys98, Cys101, and Ser308. Residues 80-297 form the Radical SAM core domain; the sequence is FNHGTATFMI…KAYADEIGFT (218 aa).

Belongs to the radical SAM superfamily. Lipoyl synthase family. The cofactor is [4Fe-4S] cluster.

The protein localises to the cytoplasm. It carries out the reaction [[Fe-S] cluster scaffold protein carrying a second [4Fe-4S](2+) cluster] + N(6)-octanoyl-L-lysyl-[protein] + 2 oxidized [2Fe-2S]-[ferredoxin] + 2 S-adenosyl-L-methionine + 4 H(+) = [[Fe-S] cluster scaffold protein] + N(6)-[(R)-dihydrolipoyl]-L-lysyl-[protein] + 4 Fe(3+) + 2 hydrogen sulfide + 2 5'-deoxyadenosine + 2 L-methionine + 2 reduced [2Fe-2S]-[ferredoxin]. It participates in protein modification; protein lipoylation via endogenous pathway; protein N(6)-(lipoyl)lysine from octanoyl-[acyl-carrier-protein]: step 2/2. Catalyzes the radical-mediated insertion of two sulfur atoms into the C-6 and C-8 positions of the octanoyl moiety bound to the lipoyl domains of lipoate-dependent enzymes, thereby converting the octanoylated domains into lipoylated derivatives. This Pseudoalteromonas translucida (strain TAC 125) protein is Lipoyl synthase.